Here is a 285-residue protein sequence, read N- to C-terminus: Small ribosomal subunit protein uS2 (285 aa).

Residues 229 to 285 (AGLASGDAKPEAGAGEPLAEWEQELLAQANPNAEGSAEAAPAAATEEAPAAQTPADF) are disordered. Low complexity predominate over residues 257-285 (ANPNAEGSAEAAPAAATEEAPAAQTPADF).

The protein belongs to the universal ribosomal protein uS2 family.

The protein is Small ribosomal subunit protein uS2 of Nocardia farcinica (strain IFM 10152).